Consider the following 264-residue polypeptide: 4-hydroxy-tetrahydrodipicolinate reductase (264 aa).

G9–M14 serves as a coordination point for NAD(+). An NADP(+)-binding site is contributed by R36. Residues G100 to T102 and S121 to M124 contribute to the NAD(+) site. H154 acts as the Proton donor/acceptor in catalysis. H155 is a binding site for (S)-2,3,4,5-tetrahydrodipicolinate. The Proton donor role is filled by K158. (S)-2,3,4,5-tetrahydrodipicolinate is bound at residue G164–T165.

This sequence belongs to the DapB family.

It localises to the cytoplasm. The enzyme catalyses (S)-2,3,4,5-tetrahydrodipicolinate + NAD(+) + H2O = (2S,4S)-4-hydroxy-2,3,4,5-tetrahydrodipicolinate + NADH + H(+). The catalysed reaction is (S)-2,3,4,5-tetrahydrodipicolinate + NADP(+) + H2O = (2S,4S)-4-hydroxy-2,3,4,5-tetrahydrodipicolinate + NADPH + H(+). The protein operates within amino-acid biosynthesis; L-lysine biosynthesis via DAP pathway; (S)-tetrahydrodipicolinate from L-aspartate: step 4/4. Its function is as follows. Catalyzes the conversion of 4-hydroxy-tetrahydrodipicolinate (HTPA) to tetrahydrodipicolinate. This Wolbachia sp. subsp. Brugia malayi (strain TRS) protein is 4-hydroxy-tetrahydrodipicolinate reductase.